We begin with the raw amino-acid sequence, 301 residues long: 2-aminobenzoylacetyl-CoA thioesterase (301 aa).

The Fe cation site is built by His69, His71, Asp73, His74, His159, Asp178, and His221.

It belongs to the metallo-beta-lactamase superfamily.

It carries out the reaction (2-aminobenzoyl)acetyl-CoA + H2O = (2-aminobenzoyl)acetate + CoA + H(+). Its activity is regulated as follows. Thioesterase activity, but not pyocyanine production, is inhibited by 2-(pyridin-3-yl)benzoic acid, 2-(1H-pyrrol-1-yl)benzoic acid and 3-methylthiophene-2-carboxylic acid. Compounds bind to the active center. In terms of biological role, required for the biosynthesis of the quorum-sensing signaling molecules 2-heptyl-4(1H)-quinolone (HHQ) and 2-heptyl-3-hydroxy-4(1H)-quinolone (Pseudomonas quinolone signal or PQS), which are important for biofilm formation and virulence. Catalyzes the hydrolysis of the intermediate 2-aminobenzoylacetyl-CoA (2-ABA-CoA) to form 2-aminobenzoylacetate (2-ABA), the precursor of HHQ. In vitro, can also hydrolyze other substrates such as S-ethyl-acetothioacetate and acetoacetyl-CoA, but is inactive against anthraniloyl-CoA, malonyl-CoA and octanoyl-CoA. Beyond its thioesterase function, is involved in the regulation of diverse genes coding for key virulence determinants and biofilm development. In Pseudomonas aeruginosa (strain ATCC 15692 / DSM 22644 / CIP 104116 / JCM 14847 / LMG 12228 / 1C / PRS 101 / PAO1), this protein is 2-aminobenzoylacetyl-CoA thioesterase.